The primary structure comprises 139 residues: Large ribosomal subunit protein uL16c (139 aa).

Positions 1 to 17 (MLSPKKTKFRKQHRGRM) are enriched in basic residues. The interval 1–23 (MLSPKKTKFRKQHRGRMKGSASK) is disordered.

This sequence belongs to the universal ribosomal protein uL16 family. In terms of assembly, part of the 50S ribosomal subunit.

The protein resides in the plastid. It is found in the chloroplast. The protein is Large ribosomal subunit protein uL16c of Pyropia yezoensis (Susabi-nori).